A 524-amino-acid chain; its full sequence is MFHCIPLWRCNRHVEAIDKRHCSLVYVPEEIYRYARSLEELLLDANQLRELPEQFFQLVKLRKLGLSDNEIQRLPPEIANFMQLVELDVSRNDIPEIPESIAFCKALQVADFSGNPLTRLPESFPELQNLTCLSVNDISLQSLPENIGNLYNLASLELRENLLTYLPDSLTQLRRLEELDLGNNEIYNLPESIGALLHLKDLWLDGNQLSELPQEIGNLKNLLCLDVSENRLERLPEEISGLTSLTYLVISQNLLETIPEGIGKLKKLSILKLDQNRLTQLPEAIGDCENLTELVLTENRLLTLPKSIGKLKKLSNLNADRNKLVSLPKEIGGCCSLTMFCIRDNRLTRLPAEVSQAVELHVLDVAGNRLHHLPLSLTTLKLKALWLSDNQSQPLLTFQTDIDRATGEKILTCVLLPQMPSEPICQESLPRCGALESLVTDMSEEAWNDRSVHRVSAIRFLEDEKDEDENETRTLQRRATPHPGELKNMKKTVENLRNDMNAAKGLDSNKNEVNHAAERVTTSV.

17 LRR repeats span residues 11 to 34, 35 to 58, 60 to 81, 83 to 105, 107 to 126, 127 to 149, 150 to 172, 173 to 196, 198 to 218, 219 to 242, 244 to 264, 265 to 288, 290 to 310, 311 to 334, 336 to 356, 357 to 380, and 382 to 405; these read NRHV…IYRY, ARSL…FFQL, KLRK…IANF, QLVE…AFCK, LQVA…SFPE, LQNL…NIGN, LYNL…SLTQ, LRRL…IGAL, HLKD…EIGN, LKNL…ISGL, SLTY…GIGK, LKKL…IGDC, NLTE…SIGK, LKKL…IGGC, SLTM…EVSQ, AVEL…LTTL, and LKAL…IDRA. Positions 456–512 form a coiled coil; the sequence is SAIRFLEDEKDEDENETRTLQRRATPHPGELKNMKKTVENLRNDMNAAKGLDSNKNE. The interval 464–485 is disordered; it reads EKDEDENETRTLQRRATPHPGE. At threonine 480 the chain carries Phosphothreonine.

As to quaternary structure, interacts with DLG1. May form a complex with DLG1 and ERBIN, where interaction between LRRC1 and ERBIN is indirect.

It localises to the cytoplasm. Its subcellular location is the membrane. This chain is Leucine-rich repeat-containing protein 1 (Lrrc1), found in Mus musculus (Mouse).